We begin with the raw amino-acid sequence, 593 residues long: Probable ubiquitin carboxyl-terminal hydrolase 4 (593 aa).

Positions 227-573 (IGLTNLGNTC…SSYILFYKRS (347 aa)) constitute a USP domain. Cys-236 acts as the Nucleophile in catalysis. 2 positions are modified to phosphoserine: Ser-338 and Ser-343. Residue His-530 is the Proton acceptor of the active site.

The protein belongs to the peptidase C19 family. As to quaternary structure, interacts with sfp47.

The protein localises to the cytoplasm. Its subcellular location is the endosome. It catalyses the reaction Thiol-dependent hydrolysis of ester, thioester, amide, peptide and isopeptide bonds formed by the C-terminal Gly of ubiquitin (a 76-residue protein attached to proteins as an intracellular targeting signal).. In terms of biological role, has an ATP-independent isopeptidase activity, cleaving at the C-terminus of the ubiquitin moiety. Acts late in the proteolytic pathway in conjunction with the 26S proteasome. Plays a role in avoiding DNA overreplication. This is Probable ubiquitin carboxyl-terminal hydrolase 4 (ubp4) from Schizosaccharomyces pombe (strain 972 / ATCC 24843) (Fission yeast).